Consider the following 140-residue polypeptide: Nucleoside diphosphate kinase (140 aa).

Positions 11, 59, 87, 93, 104, and 114 each coordinate ATP. His117 functions as the Pros-phosphohistidine intermediate in the catalytic mechanism.

Belongs to the NDK family. As to quaternary structure, homotetramer. Mg(2+) is required as a cofactor.

It localises to the cytoplasm. The catalysed reaction is a 2'-deoxyribonucleoside 5'-diphosphate + ATP = a 2'-deoxyribonucleoside 5'-triphosphate + ADP. It carries out the reaction a ribonucleoside 5'-diphosphate + ATP = a ribonucleoside 5'-triphosphate + ADP. In terms of biological role, major role in the synthesis of nucleoside triphosphates other than ATP. The ATP gamma phosphate is transferred to the NDP beta phosphate via a ping-pong mechanism, using a phosphorylated active-site intermediate. The polypeptide is Nucleoside diphosphate kinase (Brucella canis (strain ATCC 23365 / NCTC 10854 / RM-666)).